We begin with the raw amino-acid sequence, 131 residues long: Small ribosomal subunit protein uS11 (131 aa).

Belongs to the universal ribosomal protein uS11 family. In terms of assembly, part of the 30S ribosomal subunit. Interacts with proteins S7 and S18. Binds to IF-3.

Functionally, located on the platform of the 30S subunit, it bridges several disparate RNA helices of the 16S rRNA. Forms part of the Shine-Dalgarno cleft in the 70S ribosome. This Geobacter sulfurreducens (strain ATCC 51573 / DSM 12127 / PCA) protein is Small ribosomal subunit protein uS11.